Here is a 384-residue protein sequence, read N- to C-terminus: Formate dehydrogenase, chloroplastic/mitochondrial (384 aa).

The transit peptide at 1-29 (MAMRQAAKATIRACSSSSSSGYFARRQFN) directs the protein to the chloroplast and mitochondrion. Positions 128 and 152 each coordinate substrate. Residues 207-208 (RI), aspartate 227, 262-266 (PLTEK), asparagine 288, aspartate 314, and 338-341 (HTSG) each bind NAD(+).

It belongs to the D-isomer specific 2-hydroxyacid dehydrogenase family. FDH subfamily. Homodimer.

It localises to the mitochondrion. The protein resides in the plastid. It is found in the chloroplast. The enzyme catalyses formate + NAD(+) = CO2 + NADH. Its function is as follows. Catalyzes the NAD(+)-dependent oxidation of formate to carbon dioxide. Involved in the cell stress response. This chain is Formate dehydrogenase, chloroplastic/mitochondrial (FDH1), found in Arabidopsis thaliana (Mouse-ear cress).